The sequence spans 291 residues: Urease accessory protein UreD (291 aa).

The protein belongs to the UreD family. In terms of assembly, ureD, UreF and UreG form a complex that acts as a GTP-hydrolysis-dependent molecular chaperone, activating the urease apoprotein by helping to assemble the nickel containing metallocenter of UreC. The UreE protein probably delivers the nickel.

It localises to the cytoplasm. In terms of biological role, required for maturation of urease via the functional incorporation of the urease nickel metallocenter. The chain is Urease accessory protein UreD from Acinetobacter baumannii (strain ATCC 17978 / DSM 105126 / CIP 53.77 / LMG 1025 / NCDC KC755 / 5377).